Consider the following 162-residue polypeptide: MALVAGIGQLDAVVQGGHSATPRPATGPAGPAAHSGRHQYDPDAWWARATGDSREAGGLGRTLAAASVAGQQQRHGALLESAVTVVRPALLWNDTRRPGAAADLIQELGGADKWAEAVGIVPVASLTLTNSGWLARHEPANAAKVAAICLPHDWLTWKLSGS.

Residues 16-39 are disordered; sequence GGHSATPRPATGPAGPAAHSGRHQ. Low complexity predominate over residues 20–33; the sequence is ATPRPATGPAGPAA.

This sequence belongs to the FGGY kinase family.

It catalyses the reaction D-xylulose + ATP = D-xylulose 5-phosphate + ADP + H(+). Its function is as follows. Catalyzes the phosphorylation of D-xylulose to D-xylulose 5-phosphate. This Actinoplanes sp. (strain ATCC 31351 / 3876) (Ampullariella sp.) protein is Xylulose kinase.